The sequence spans 1096 residues: Serine/threonine-protein kinase mig-15 (1096 aa).

One can recognise a Protein kinase domain in the interval 21-288 (FELIEVVGNG…TGALLRHPFI (268 aa)). Residues 27–35 (VGNGTYGQV) and K50 each bind ATP. The active-site Proton acceptor is the D151. Over residues 293-315 (HEQTIRHSIKEHIDRNRRVKKDD) the composition is skewed to basic and acidic residues. Disordered regions lie at residues 293–351 (HEQT…MIPM), 380–492 (LPQQ…QQSR), 517–545 (KMGGHHNGRSREESMSPPPPAPPPREASI), and 574–664 (NGEG…DLLP). The span at 316-328 (ADYEYSGSEDDEP) shows a compositional bias: acidic residues. Over residues 380 to 393 (LPQQPAPAPFQYQQ) the composition is skewed to low complexity. Composition is skewed to basic and acidic residues over residues 397 to 408 (VEPRRESSEVKL) and 453 to 472 (NYEKRRRSEREERRERERQA). Over residues 532 to 541 (SPPPPAPPPR) the composition is skewed to pro residues. Acidic residues predominate over residues 629–642 (LDDDDSDSDNEEGN). The CNH domain occupies 778–1070 (SGEILCAALW…KFLCERNDKV (293 aa)).

This sequence belongs to the protein kinase superfamily. STE Ser/Thr protein kinase family. STE20 subfamily.

The catalysed reaction is L-seryl-[protein] + ATP = O-phospho-L-seryl-[protein] + ADP + H(+). The enzyme catalyses L-threonyl-[protein] + ATP = O-phospho-L-threonyl-[protein] + ADP + H(+). In terms of biological role, involved in cell migration and signal transduction. Important in several developmental processes including epidermal development, Q neuroblast migrations and muscle arm targeting. Required with ina-1/pat-3 to stabilize the commissural axons growth cone along a precise direction and are required for the cell to respond appropriately when signaling in the growth cone must change. During gonad morphogenesis, involved in distal tip cell (DTC) migration from the dorsal side of the hermaphrodite body to the midbody to allow for formation of gonad arms. This Caenorhabditis elegans protein is Serine/threonine-protein kinase mig-15 (mig-15).